Here is a 234-residue protein sequence, read N- to C-terminus: Carboxy-S-adenosyl-L-methionine synthase (234 aa).

S-adenosyl-L-methionine is bound by residues Tyr-35, 60-62 (GCS), 83-84 (DN), 109-110 (DI), Asn-124, and Arg-191.

Belongs to the class I-like SAM-binding methyltransferase superfamily. Cx-SAM synthase family. Homodimer.

It catalyses the reaction prephenate + S-adenosyl-L-methionine = carboxy-S-adenosyl-L-methionine + 3-phenylpyruvate + H2O. Catalyzes the conversion of S-adenosyl-L-methionine (SAM) to carboxy-S-adenosyl-L-methionine (Cx-SAM). The chain is Carboxy-S-adenosyl-L-methionine synthase from Campylobacter concisus (strain 13826).